A 188-amino-acid polypeptide reads, in one-letter code: Elongation factor P (188 aa).

It belongs to the elongation factor P family.

It localises to the cytoplasm. Its pathway is protein biosynthesis; polypeptide chain elongation. In terms of biological role, involved in peptide bond synthesis. Stimulates efficient translation and peptide-bond synthesis on native or reconstituted 70S ribosomes in vitro. Probably functions indirectly by altering the affinity of the ribosome for aminoacyl-tRNA, thus increasing their reactivity as acceptors for peptidyl transferase. The chain is Elongation factor P from Paramagnetospirillum magneticum (strain ATCC 700264 / AMB-1) (Magnetospirillum magneticum).